We begin with the raw amino-acid sequence, 390 residues long: MEEPGAQCAPPPPAGSETWVPQANLSSAPSQNCSAKDYIYQDSISLPWKVLLVMLLALITLATTLSNAFVIATVYRTRKLHTPANYLIASLAVTDLLVSILVMPISTMYTVTGRWTLGQVVCDFWLSSDITCCTASILHLCVIALDRYWAITDAVEYSAKRTPKRAAVMIALVWVFSISISLPPFFWRQAKAEEEVSECVVNTDHILYTVYSTVGAFYFPTLLLIALYGRIYVEARSRILKQTPNRTGKRLTRAQLITDSPGSTSSVTSINSRVPDVPSESGSPVYVNQVKVRVSDALLEKKKLMAARERKATKTLGIILGAFIVCWLPFFIISLVMPICKDACWFHLAIFDFFTWLGYLNSLINPIIYTMSNEDFKQAFHKLIRFKCTS.

Residues 1–46 (MEEPGAQCAPPPPAGSETWVPQANLSSAPSQNCSAKDYIYQDSISL) lie on the Extracellular side of the membrane. Asn24 and Asn32 each carry an N-linked (GlcNAc...) asparagine glycan. The chain crosses the membrane as a helical span at residues 47–72 (PWKVLLVMLLALITLATTLSNAFVIA). Residues 73 to 86 (TVYRTRKLHTPANY) lie on the Cytoplasmic side of the membrane. A helical transmembrane segment spans residues 87–111 (LIASLAVTDLLVSILVMPISTMYTV). Topologically, residues 112-119 (TGRWTLGQ) are extracellular. Residues 120–145 (VVCDFWLSSDITCCTASILHLCVIAL) form a helical membrane-spanning segment. Residues Cys122 and Cys199 are joined by a disulfide bond. Ergotamine-binding residues include Asp129 and Thr134. Residues 146–148 (DRY) carry the DRY motif; important for ligand-induced conformation changes and signaling motif. The Cytoplasmic segment spans residues 146–165 (DRYWAITDAVEYSAKRTPKR). A helical membrane pass occupies residues 166-184 (AAVMIALVWVFSISISLPP). At 185 to 205 (FFWRQAKAEEEVSECVVNTDH) the chain is on the extracellular side. Val201 is an ergotamine binding site. The helical transmembrane segment at 206–229 (ILYTVYSTVGAFYFPTLLLIALYG) threads the bilayer. The Cytoplasmic portion of the chain corresponds to 230 to 315 (RIYVEARSRI…AARERKATKT (86 aa)). Positions 259–272 (DSPGSTSSVTSINS) are enriched in polar residues. The tract at residues 259–281 (DSPGSTSSVTSINSRVPDVPSES) is disordered. Residues 316–337 (LGIILGAFIVCWLPFFIISLVM) form a helical membrane-spanning segment. Topologically, residues 338–347 (PICKDACWFH) are extracellular. A helical transmembrane segment spans residues 348 to 370 (LAIFDFFTWLGYLNSLINPIIYT). An NPxxY motif; important for ligand-induced conformation changes and signaling motif is present at residues 365 to 369 (NPIIY). The Cytoplasmic portion of the chain corresponds to 371–390 (MSNEDFKQAFHKLIRFKCTS). The S-palmitoyl cysteine moiety is linked to residue Cys388.

This sequence belongs to the G-protein coupled receptor 1 family. In terms of assembly, homodimer. Heterodimer with HTR1D. In terms of processing, phosphorylated. Desensitization of the receptor may be mediated by its phosphorylation. Palmitoylated. Detected in cerebral artery smooth muscle cells (at protein level). Detected in brain cortex, striatum, amygdala, medulla, hippocampus, caudate nucleus and putamen.

The protein resides in the cell membrane. In terms of biological role, G-protein coupled receptor for 5-hydroxytryptamine (serotonin). Also functions as a receptor for ergot alkaloid derivatives, various anxiolytic and antidepressant drugs and other psychoactive substances, such as lysergic acid diethylamide (LSD). Ligand binding causes a conformation change that triggers signaling via guanine nucleotide-binding proteins (G proteins) and modulates the activity of downstream effectors, such as adenylate cyclase. HTR1B is coupled to G(i)/G(o) G alpha proteins and mediates inhibitory neurotransmission by inhibiting adenylate cyclase activity. Arrestin family members inhibit signaling via G proteins and mediate activation of alternative signaling pathways. Regulates the release of 5-hydroxytryptamine, dopamine and acetylcholine in the brain, and thereby affects neural activity, nociceptive processing, pain perception, mood and behavior. Besides, plays a role in vasoconstriction of cerebral arteries. This Homo sapiens (Human) protein is 5-hydroxytryptamine receptor 1B.